The primary structure comprises 617 residues: Electron transfer flavoprotein-ubiquinone oxidoreductase, mitochondrial (617 aa).

The N-terminal 33 residues, 1–33 (MLVPLAKLSCPAYQCFHALKIKKNYLPLCATRW), are a transit peptide targeting the mitochondrion. An FAD-binding site is contributed by 71–85 (VVIVGAGPAGLSAAV). N6-acetyllysine is present on Lys96. Residues 109-130 (IGAHTLSGACLDPGAFKELFPD) lie within the membrane without spanning it. N6-acetyllysine occurs at positions 132 and 223. A ubiquinone is bound by residues Gly305 and Gly306. Lys357 is modified (N6-acetyllysine). Residues 428 to 447 (MGLHVTEYEDNLKNSWVWKE) lie within the membrane without spanning it. Position 551 is a phosphoserine (Ser551). [4Fe-4S] cluster-binding residues include Cys561, Cys586, Cys589, and Cys592. The 30-residue stretch at 577 to 606 (FRLQINAQNCVHCKTCDIKDPSQNINWVVP) folds into the 4Fe-4S ferredoxin-type domain.

Belongs to the ETF-QO/FixC family. Monomer. Requires [4Fe-4S] cluster as cofactor. The cofactor is FAD.

Its subcellular location is the mitochondrion inner membrane. The catalysed reaction is a ubiquinone + reduced [electron-transfer flavoprotein] = a ubiquinol + oxidized [electron-transfer flavoprotein] + H(+). In terms of biological role, accepts electrons from ETF and reduces ubiquinone. The chain is Electron transfer flavoprotein-ubiquinone oxidoreductase, mitochondrial (ETFDH) from Pongo abelii (Sumatran orangutan).